The chain runs to 176 residues: Large ribosomal subunit protein bL12m (176 aa).

It belongs to the bacterial ribosomal protein bL12 family. In terms of assembly, component of the mitochondrial large ribosomal subunit (mt-LSU). Mature N.crassa 74S mitochondrial ribosomes consist of a small (37S) and a large (54S) subunit. The 37S small subunit contains a 16S ribosomal RNA (16S mt-rRNA) and 32 different proteins. The 54S large subunit contains a 23S rRNA (23S mt-rRNA) and 42 different proteins.

Its subcellular location is the mitochondrion. Component of the mitochondrial ribosome (mitoribosome), a dedicated translation machinery responsible for the synthesis of mitochondrial genome-encoded proteins, including at least some of the essential transmembrane subunits of the mitochondrial respiratory chain. The mitoribosomes are attached to the mitochondrial inner membrane and translation products are cotranslationally integrated into the membrane. This Neurospora crassa (strain ATCC 24698 / 74-OR23-1A / CBS 708.71 / DSM 1257 / FGSC 987) protein is Large ribosomal subunit protein bL12m (mrpl12).